The sequence spans 210 residues: Probable transcriptional regulator ycf29 (210 aa).

The region spanning 3–119 (NILILDTDIG…ELVVIIEGVL (117 aa)) is the Response regulatory domain. D52 is subject to 4-aspartylphosphate. The HTH luxR-type domain occupies 142–207 (SNNLKINFTP…ELVKYALENN (66 aa)).

It localises to the plastid. Its subcellular location is the cyanelle. This chain is Probable transcriptional regulator ycf29 (ycf29), found in Cyanophora paradoxa.